Here is a 170-residue protein sequence, read N- to C-terminus: Cytochrome bc1 complex Rieske iron-sulfur subunit (170 aa).

The Rieske domain maps to 63–153 (KAALMIIRLE…IGVNDEGYLE (91 aa)). [2Fe-2S] cluster contacts are provided by Cys96, His98, Cys115, and His118. An intrachain disulfide couples Cys101 to Cys117.

In terms of assembly, the cytochrome bc1 complex is composed of a cytochrome b (QcrB), the Rieske iron-sulfur protein (QcrA) and a diheme cytochrome c (QcrC) subunit. Requires [2Fe-2S] cluster as cofactor.

Its subcellular location is the cell membrane. Iron-sulfur subunit of the cytochrome bc1 complex, an essential component of the respiratory electron transport chain required for ATP synthesis. The bc1 complex catalyzes the oxidation of menaquinol and the reduction of cytochrome c in the respiratory chain. The bc1 complex operates through a Q-cycle mechanism that couples electron transfer to generation of the proton gradient that drives ATP synthesis. This is Cytochrome bc1 complex Rieske iron-sulfur subunit (qcrA) from Streptomyces lividans.